Here is a 142-residue protein sequence, read N- to C-terminus: Large-conductance mechanosensitive channel (142 aa).

The next 3 helical transmembrane spans lie at 14–34 (VMDL…VDSV), 38–58 (LVMP…NYFL), and 82–102 (GNFI…FLLI).

It belongs to the MscL family. In terms of assembly, homopentamer.

It localises to the cell inner membrane. In terms of biological role, channel that opens in response to stretch forces in the membrane lipid bilayer. May participate in the regulation of osmotic pressure changes within the cell. The polypeptide is Large-conductance mechanosensitive channel (Rhizobium meliloti (strain 1021) (Ensifer meliloti)).